A 257-amino-acid polypeptide reads, in one-letter code: Hydroxyethylthiazole kinase 1 (257 aa).

A substrate-binding site is contributed by methionine 41. Positions 117 and 162 each coordinate ATP. Residue glycine 189 coordinates substrate.

This sequence belongs to the Thz kinase family. Requires Mg(2+) as cofactor.

The enzyme catalyses 5-(2-hydroxyethyl)-4-methylthiazole + ATP = 4-methyl-5-(2-phosphooxyethyl)-thiazole + ADP + H(+). Its pathway is cofactor biosynthesis; thiamine diphosphate biosynthesis; 4-methyl-5-(2-phosphoethyl)-thiazole from 5-(2-hydroxyethyl)-4-methylthiazole: step 1/1. Catalyzes the phosphorylation of the hydroxyl group of 4-methyl-5-beta-hydroxyethylthiazole (THZ). In Oceanobacillus iheyensis (strain DSM 14371 / CIP 107618 / JCM 11309 / KCTC 3954 / HTE831), this protein is Hydroxyethylthiazole kinase 1.